A 1417-amino-acid chain; its full sequence is DNA-directed RNA polymerase subunit beta' (1417 aa).

Residues C68, C70, C83, and C86 each contribute to the Zn(2+) site. D458, D460, and D462 together coordinate Mg(2+). 4 residues coordinate Zn(2+): C811, C884, C891, and C894.

Belongs to the RNA polymerase beta' chain family. As to quaternary structure, the RNAP catalytic core consists of 2 alpha, 1 beta, 1 beta' and 1 omega subunit. When a sigma factor is associated with the core the holoenzyme is formed, which can initiate transcription. Mg(2+) is required as a cofactor. Requires Zn(2+) as cofactor.

It carries out the reaction RNA(n) + a ribonucleoside 5'-triphosphate = RNA(n+1) + diphosphate. Functionally, DNA-dependent RNA polymerase catalyzes the transcription of DNA into RNA using the four ribonucleoside triphosphates as substrates. The chain is DNA-directed RNA polymerase subunit beta' from Francisella tularensis subsp. mediasiatica (strain FSC147).